The primary structure comprises 211 residues: Dibenzothiophene metabolism operon protein DoxH (211 aa).

Its pathway is aromatic compound metabolism; naphthalene degradation. Functionally, may be involved in the conversion of 2-hydroxy-4-(2'-oxo-3,5-cyclohexadienyl)-buta-2,4-dienoate to cis-O-hydroxybenzylidenepyruvate. DoxH and doxJ encode different enzymes that may have interchangeable functions. This chain is Dibenzothiophene metabolism operon protein DoxH (doxH), found in Pseudomonas sp. (strain C18).